The sequence spans 82 residues: DNA-directed RNA polymerase subunit omega (82 aa).

Belongs to the RNA polymerase subunit omega family. The RNAP catalytic core consists of 2 alpha, 1 beta, 1 beta' and 1 omega subunit. When a sigma factor is associated with the core the holoenzyme is formed, which can initiate transcription.

It carries out the reaction RNA(n) + a ribonucleoside 5'-triphosphate = RNA(n+1) + diphosphate. Promotes RNA polymerase assembly. Latches the N- and C-terminal regions of the beta' subunit thereby facilitating its interaction with the beta and alpha subunits. This Lacticaseibacillus casei (strain BL23) (Lactobacillus casei) protein is DNA-directed RNA polymerase subunit omega.